A 216-amino-acid polypeptide reads, in one-letter code: uncharacterized protein (216 aa).

This is an uncharacterized protein from Caenorhabditis elegans.